Here is a 775-residue protein sequence, read N- to C-terminus: DNA polymerase (775 aa).

The protein belongs to the DNA polymerase type-B family. In terms of assembly, monomer.

It carries out the reaction DNA(n) + a 2'-deoxyribonucleoside 5'-triphosphate = DNA(n+1) + diphosphate. In addition to polymerase activity, this DNA polymerase exhibits 3' to 5' exonuclease activity. The sequence is that of DNA polymerase (pol) from Pyrococcus glycovorans.